The sequence spans 145 residues: Transcriptional regulator MraZ (145 aa).

SpoVT-AbrB domains lie at 5-49 (TYNH…LESE) and 78-121 (TYKV…AKEV).

Belongs to the MraZ family. In terms of assembly, forms oligomers.

It is found in the cytoplasm. Its subcellular location is the nucleoid. The polypeptide is Transcriptional regulator MraZ (Ureaplasma urealyticum serovar 10 (strain ATCC 33699 / Western)).